A 107-amino-acid polypeptide reads, in one-letter code: Protein Rev (107 aa).

A phosphoserine; by host CK2 mark is found at Ser-5 and Ser-8. A homomultimerization region spans residues 18–26 (IIKILYQSN). 2 disordered regions span residues 26-50 (NPYP…ARQR) and 82-107 (NINC…VGNP). A Nuclear localization signal and RNA-binding (RRE) motif is present at residues 34–50 (TRQARRNRRRRWRARQR). The segment covering 36–50 (QARRNRRRRWRARQR) has biased composition (basic residues). The Nuclear export signal and binding to XPO1 signature appears at 73–84 (FQLPPIERLNIN). Residues 86–101 (SESGGTSGTQQPQGNT) show a composition bias toward low complexity. Phosphoserine; by host is present on Ser-92.

The protein belongs to the HIV-1 REV protein family. Homomultimer; when bound to the RRE. Multimeric assembly is essential for activity and may involve XPO1. Binds to human KPNB1, XPO1, TNPO1, RANBP5 and IPO7. Interacts with the viral Integrase. Interacts with human KHDRBS1. Interacts with human NAP1; this interaction decreases Rev multimerization and stimulates its activity. Interacts with human DEAD-box helicases DDX3 and DDX24; these interactions may serve for viral RNA export to the cytoplasm and packaging, respectively. Interacts with human PSIP1; this interaction may inhibit HIV-1 DNA integration by promoting dissociation of the Integrase-LEDGF/p75 complex. Post-translationally, asymmetrically arginine dimethylated at one site by host PRMT6. Methylation impairs the RNA-binding activity and export of viral RNA from the nucleus to the cytoplasm. In terms of processing, phosphorylated by protein kinase CK2. Presence of, and maybe binding to the N-terminus of the regulatory beta subunit of CK2 is necessary for CK2-mediated Rev's phosphorylation.

Its subcellular location is the host nucleus. The protein resides in the host nucleolus. It localises to the host cytoplasm. Functionally, escorts unspliced or incompletely spliced viral pre-mRNAs (late transcripts) out of the nucleus of infected cells. These pre-mRNAs carry a recognition sequence called Rev responsive element (RRE) located in the env gene, that is not present in fully spliced viral mRNAs (early transcripts). This function is essential since most viral proteins are translated from unspliced or partially spliced pre-mRNAs which cannot exit the nucleus by the pathway used by fully processed cellular mRNAs. Rev itself is translated from a fully spliced mRNA that readily exits the nucleus. Rev's nuclear localization signal (NLS) binds directly to KPNB1/Importin beta-1 without previous binding to KPNA1/Importin alpha-1. KPNB1 binds to the GDP bound form of RAN (Ran-GDP) and targets Rev to the nucleus. In the nucleus, the conversion from Ran-GDP to Ran-GTP dissociates Rev from KPNB1 and allows Rev's binding to the RRE in viral pre-mRNAs. Rev multimerization on the RRE via cooperative assembly exposes its nuclear export signal (NES) to the surface. Rev can then form a complex with XPO1/CRM1 and Ran-GTP, leading to nuclear export of the complex. Conversion from Ran-GTP to Ran-GDP mediates dissociation of the Rev/RRE/XPO1/RAN complex, so that Rev can return to the nucleus for a subsequent round of export. Beside KPNB1, also seems to interact with TNPO1/Transportin-1, RANBP5/IPO5 and IPO7/RANBP7 for nuclear import. The nucleoporin-like HRB/RIP is an essential cofactor that probably indirectly interacts with Rev to release HIV RNAs from the perinuclear region to the cytoplasm. The polypeptide is Protein Rev (Human immunodeficiency virus type 1 group M subtype C (isolate 92BR025) (HIV-1)).